A 62-amino-acid chain; its full sequence is Mu-elapitoxin-Na1a (62 aa).

4 cysteine pairs are disulfide-bonded: Cys-3/Cys-22, Cys-15/Cys-40, Cys-44/Cys-55, and Cys-56/Cys-61.

Belongs to the three-finger toxin family. Short-chain subfamily. Orphan group XV sub-subfamily. As to expression, expressed by the venom gland.

The protein resides in the secreted. Potent inhibitor of human Nav1.8/SCN10A (IC(50)=141-380 nM). Is highly selective for this channel and acts in a reversible manner. Shows a depolarizing shift of activation and hyperpolarizing shift of inactivation. In contrast to the very similar cytotoxin A5 (AC P62375), does not seem to bind integrin alpha-V/beta-3, since it does not promote or inhibit the proliferation of HUVECs and C-PAE cells. In vivo, in rodent models of inflammatory and neuropathic pain, it alleviates nociceptive behaviors more potently than does morphine. It displays no evident cytotoxic, hemolytic and cardiotoxic activities and produces no obvious adverse responses in mice even at a dose 30-fold higher than that producing a significant analgesic effect. This Naja atra (Chinese cobra) protein is Mu-elapitoxin-Na1a.